A 251-amino-acid chain; its full sequence is Hydroxyacylglutathione hydrolase (251 aa).

Positions 53, 55, 57, 58, 110, 127, and 165 each coordinate Zn(2+).

The protein belongs to the metallo-beta-lactamase superfamily. Glyoxalase II family. In terms of assembly, monomer. Zn(2+) is required as a cofactor.

The catalysed reaction is an S-(2-hydroxyacyl)glutathione + H2O = a 2-hydroxy carboxylate + glutathione + H(+). The protein operates within secondary metabolite metabolism; methylglyoxal degradation; (R)-lactate from methylglyoxal: step 2/2. Thiolesterase that catalyzes the hydrolysis of S-D-lactoyl-glutathione to form glutathione and D-lactic acid. This chain is Hydroxyacylglutathione hydrolase, found in Escherichia coli O45:K1 (strain S88 / ExPEC).